The following is a 323-amino-acid chain: Lipoyl synthase (323 aa).

Positions 61, 66, 72, 87, 91, 94, and 303 each coordinate [4Fe-4S] cluster. Residues 73 to 292 (WTKKTATFLV…EQYGLSIGIP (220 aa)) enclose the Radical SAM core domain.

The protein belongs to the radical SAM superfamily. Lipoyl synthase family. The cofactor is [4Fe-4S] cluster.

It localises to the cytoplasm. The catalysed reaction is [[Fe-S] cluster scaffold protein carrying a second [4Fe-4S](2+) cluster] + N(6)-octanoyl-L-lysyl-[protein] + 2 oxidized [2Fe-2S]-[ferredoxin] + 2 S-adenosyl-L-methionine + 4 H(+) = [[Fe-S] cluster scaffold protein] + N(6)-[(R)-dihydrolipoyl]-L-lysyl-[protein] + 4 Fe(3+) + 2 hydrogen sulfide + 2 5'-deoxyadenosine + 2 L-methionine + 2 reduced [2Fe-2S]-[ferredoxin]. Its pathway is protein modification; protein lipoylation via endogenous pathway; protein N(6)-(lipoyl)lysine from octanoyl-[acyl-carrier-protein]: step 2/2. Functionally, catalyzes the radical-mediated insertion of two sulfur atoms into the C-6 and C-8 positions of the octanoyl moiety bound to the lipoyl domains of lipoate-dependent enzymes, thereby converting the octanoylated domains into lipoylated derivatives. This Protochlamydia amoebophila (strain UWE25) protein is Lipoyl synthase.